A 2522-amino-acid chain; its full sequence is Unconventional myosin-IXAa (2522 aa).

The 99-residue stretch at Ser15–Leu113 folds into the Ras-associating domain. The Myosin motor domain maps to Lys147 to His1007. The chain crosses the membrane as a helical span at residues Ile176–Tyr196. Gly240–Thr247 serves as a coordination point for ATP. A disordered region spans residues Val767–Ser802. Residues Ser777–Asn786 show a composition bias toward polar residues. The actin-binding stretch occupies residues Leu888–Ser910. IQ domains lie at Ser1012 to Gln1039, Gln1063 to Leu1092, Gln1102 to Arg1131, and Gln1125 to Lys1154. The tract at residues Ser1012–Gln1149 is neck or regulatory domain. The segment at Lys1150 to Arg2497 is tail. Disordered stretches follow at residues Gly1218–Arg1254, Asp1318–Arg1409, Asn1424–Phe1612, Asn1630–Arg1754, Arg1799–Arg1827, and Leu1962–Asp1983. Over residues Thr1229 to Gln1242 the composition is skewed to basic and acidic residues. 2 stretches are compositionally biased toward polar residues: residues Ser1330–Asp1349 and Ser1366–Thr1390. Composition is skewed to basic and acidic residues over residues Pro1399–Arg1408 and Ala1426–Asp1435. The segment covering Ala1437–Ser1454 has biased composition (polar residues). Residues Val1456–Glu1525 adopt a coiled-coil conformation. Composition is skewed to basic and acidic residues over residues Glu1458–Glu1484, Ile1492–Arg1523, Pro1549–Asp1566, and Leu1580–Ser1589. Composition is skewed to polar residues over residues Lys1594–Met1604 and Gln1631–Val1641. Basic residues predominate over residues Pro1656–Arg1665. The span at Gly1681–Glu1690 shows a compositional bias: acidic residues. Basic and acidic residues-rich tracts occupy residues Leu1738–Val1753 and Leu1810–Pro1822. A Phorbol-ester/DAG-type zinc finger spans residues Gly1990–Cys2039. A Rho-GAP domain is found at Val2054 to Tyr2242. 2 disordered regions span residues Pro2274–Lys2325 and Leu2348–Val2522. The stretch at Gln2317–Glu2344 forms a coiled coil. Residues Thr2366–Asp2383 are compositionally biased toward polar residues. Residues Ser2413–Ser2429 are compositionally biased toward low complexity. Positions Arg2436 to Ser2448 are enriched in basic residues. A compositionally biased stretch (basic and acidic residues) spans Arg2497–Glu2506.

This sequence belongs to the TRAFAC class myosin-kinesin ATPase superfamily. Myosin family.

The protein localises to the membrane. The protein resides in the cytoplasm. Its subcellular location is the synapse. It localises to the cell projection. It is found in the growth cone. In terms of biological role, myosins are actin-based motor molecules with ATPase activity. Unconventional myosins serve in intracellular movements. Regulates Rho by stimulating it's GTPase activity in neurons. Required for the regulation of neurite branching and motor neuron axon guidance. This is Unconventional myosin-IXAa (myo9aa) from Danio rerio (Zebrafish).